The primary structure comprises 230 residues: Dephospho-CoA kinase (230 aa).

A DPCK domain is found at 3–206 (LVGLTGGIAS…EPLTWKERLR (204 aa)). 8-15 (GGIASGKS) lines the ATP pocket.

It belongs to the CoaE family.

It carries out the reaction 3'-dephospho-CoA + ATP = ADP + CoA + H(+). It functions in the pathway cofactor biosynthesis; coenzyme A biosynthesis; CoA from (R)-pantothenate: step 5/5. In terms of biological role, catalyzes the phosphorylation of the 3'-hydroxyl group of dephosphocoenzyme A to form coenzyme A. This is Dephospho-CoA kinase from Oryza sativa subsp. japonica (Rice).